Consider the following 637-residue polypeptide: Probable potassium transport system protein Kup 2 (637 aa).

The next 12 helical transmembrane spans lie at 18-38 (FLVL…TSPL), 61-81 (LISL…VLFL), 107-127 (MPVL…DAMI), 145-165 (PAFS…LFAV), 174-194 (AVFF…GGLI), 211-231 (ALWF…AVFL), 255-275 (WFIL…ALVL), 293-313 (ALFP…QAVI), 345-365 (IYVP…IFSF), 371-391 (LATA…LMAF), 402-422 (AFTA…FLAA), and 429-449 (DGGW…WTWT).

The protein belongs to the HAK/KUP transporter (TC 2.A.72) family.

The protein localises to the cell inner membrane. It carries out the reaction K(+)(in) + H(+)(in) = K(+)(out) + H(+)(out). Transport of potassium into the cell. Likely operates as a K(+):H(+) symporter. The chain is Probable potassium transport system protein Kup 2 from Agrobacterium fabrum (strain C58 / ATCC 33970) (Agrobacterium tumefaciens (strain C58)).